The primary structure comprises 1069 residues: Kinesin-like protein vab-8 (1069 aa).

Residues P15–K325 form the Kinesin motor domain. Disordered stretches follow at residues M328 to G374, S391 to P436, and E572 to S598. Interaction with unc-51 stretches follow at residues G331–Y517 and Y517–D719. Low complexity-rich tracts occupy residues S339–R364 and S391–S407. The segment at S403–K877 is interaction with unc-73. Positions D719–D769 form a coiled coil. The tract at residues S786 to Y960 is disordered. The segment covering G824–G847 has biased composition (low complexity). Basic and acidic residues predominate over residues S883 to Q897. Over residues T906–S928 the composition is skewed to low complexity. Residues T938–Y960 show a composition bias toward polar residues. Residues L990 to S1027 adopt a coiled-coil conformation.

This sequence belongs to the TRAFAC class myosin-kinesin ATPase superfamily. Kinesin family. KIF26 subfamily. In terms of assembly, interacts with unc-51 and unc-73. Post-translationally, phosphorylated by unc-51.

Its subcellular location is the cytoplasm. It localises to the cytoskeleton. Required for posterior migration of cells and axon growth cones during nervous system assembly. In PLM neuron, regulates innexin unc-9 gap junction turnover by suppressing unc-9 transport out of the gap junctions. The polypeptide is Kinesin-like protein vab-8 (vab-8) (Caenorhabditis briggsae).